The following is a 134-amino-acid chain: Profilin-3 (134 aa).

A disulfide bond links Cys13 and Cys118. Residues 84–100 (AVIRGKKGSGGITIKKT) carry the Involved in PIP2 interaction motif. Thr114 is subject to Phosphothreonine.

This sequence belongs to the profilin family. As to quaternary structure, occurs in many kinds of cells as a complex with monomeric actin in a 1:1 ratio. Post-translationally, phosphorylated by MAP kinases.

Its subcellular location is the cytoplasm. It is found in the cytoskeleton. Its function is as follows. Binds to actin and affects the structure of the cytoskeleton. At high concentrations, profilin prevents the polymerization of actin, whereas it enhances it at low concentrations. The polypeptide is Profilin-3 (Olea europaea (Common olive)).